Here is a 612-residue protein sequence, read N- to C-terminus: Large ribosomal subunit assembly factor BipA (612 aa).

The 196-residue stretch at 5–200 folds into the tr-type G domain; that stretch reads NDLRNIAIIA…TIIKHVPAPV (196 aa). GTP-binding positions include 17-22 and 130-133; these read DHGKTT and NKID.

The protein belongs to the TRAFAC class translation factor GTPase superfamily. Classic translation factor GTPase family. BipA subfamily. As to quaternary structure, monomer.

Its subcellular location is the cytoplasm. The enzyme catalyses GTP + H2O = GDP + phosphate + H(+). In terms of biological role, a 50S ribosomal subunit assembly protein with GTPase activity, required for 50S subunit assembly at low temperatures, may also play a role in translation. Binds GTP and analogs. Binds the 70S ribosome between the 30S and 50S subunits, in a similar position as ribosome-bound EF-G; it contacts a number of ribosomal proteins, both rRNAs and the A-site tRNA. The sequence is that of Large ribosomal subunit assembly factor BipA from Bacillus subtilis (strain 168).